The sequence spans 309 residues: tRNA dimethylallyltransferase (309 aa).

9–16 (GPTAVGKT) is an ATP binding site. 11–16 (TAVGKT) contacts substrate. Residues 34–37 (DSMQ) form an interaction with substrate tRNA region.

Belongs to the IPP transferase family. In terms of assembly, monomer. Mg(2+) serves as cofactor.

The enzyme catalyses adenosine(37) in tRNA + dimethylallyl diphosphate = N(6)-dimethylallyladenosine(37) in tRNA + diphosphate. Its function is as follows. Catalyzes the transfer of a dimethylallyl group onto the adenine at position 37 in tRNAs that read codons beginning with uridine, leading to the formation of N6-(dimethylallyl)adenosine (i(6)A). The polypeptide is tRNA dimethylallyltransferase (Clostridium kluyveri (strain NBRC 12016)).